The chain runs to 181 residues: ATP synthase subunit b (181 aa).

The chain crosses the membrane as a helical span at residues 16-36 (LIPPIPELVIGLIAFVIVFGF).

Belongs to the ATPase B chain family. As to quaternary structure, F-type ATPases have 2 components, F(1) - the catalytic core - and F(0) - the membrane proton channel. F(1) has five subunits: alpha(3), beta(3), gamma(1), delta(1), epsilon(1). F(0) has three main subunits: a(1), b(2) and c(10-14). The alpha and beta chains form an alternating ring which encloses part of the gamma chain. F(1) is attached to F(0) by a central stalk formed by the gamma and epsilon chains, while a peripheral stalk is formed by the delta and b chains.

It is found in the cell membrane. Functionally, f(1)F(0) ATP synthase produces ATP from ADP in the presence of a proton or sodium gradient. F-type ATPases consist of two structural domains, F(1) containing the extramembraneous catalytic core and F(0) containing the membrane proton channel, linked together by a central stalk and a peripheral stalk. During catalysis, ATP synthesis in the catalytic domain of F(1) is coupled via a rotary mechanism of the central stalk subunits to proton translocation. Component of the F(0) channel, it forms part of the peripheral stalk, linking F(1) to F(0). In Streptomyces lividans, this protein is ATP synthase subunit b.